Consider the following 204-residue polypeptide: Quinol oxidase subunit 3 (204 aa).

The next 6 helical transmembrane spans lie at 27–47, 66–86, 95–115, 118–138, 140–160, and 184–204; these read FWIFLGAEIVLFSTLFATFFV, LVMIMTFLLLISSFTCGIAVH, GVVIWTIITLLLGAGFVGCEI, FVHYVHEGAALSTSAFWSGFF, LLGTHGTHVTIGIFWITGILI, and FLDVVWIFIFTGVYLMGLGGL.

It belongs to the cytochrome c oxidase subunit 3 family.

The protein localises to the cell membrane. It carries out the reaction 2 a quinol + O2 = 2 a quinone + 2 H2O. In terms of biological role, catalyzes quinol oxidation with the concomitant reduction of oxygen to water. Major component for energy conversion during vegetative growth. The protein is Quinol oxidase subunit 3 (qoxC) of Bacillus subtilis (strain 168).